The following is a 133-amino-acid chain: P2Y purinoceptor 2 (133 aa).

The Cytoplasmic segment spans residues 1 to 26; sequence ISVHRCLGVLRPLHSLRWGRARYARR. Residues 27-47 traverse the membrane as a helical segment; that stretch reads VAFAVWVLVLYCQAPVLYFVT. Topologically, residues 48 to 74 are extracellular; it reads TSTRSSRIICHDTSARELFSHFVAYSS. A helical transmembrane segment spans residues 75–95; the sequence is VMLSLLFAAPFAVILVCYVLM. Residues 96 to 116 lie on the Cytoplasmic side of the membrane; sequence ARRLLKPAYGTSGGLPRAKRK. The chain crosses the membrane as a helical span at residues 117–133; the sequence is SVRTIAIVLTVFVLCFL.

This sequence belongs to the G-protein coupled receptor 1 family.

It is found in the cell membrane. Its function is as follows. Receptor for ATP and UTP coupled to G-proteins that activate a phosphatidylinositol-calcium second messenger system. The polypeptide is P2Y purinoceptor 2 (P2RY2) (Bos taurus (Bovine)).